Here is a 242-residue protein sequence, read N- to C-terminus: Venom nerve growth factor 3 (242 aa).

The signal sequence occupies residues 1 to 18 (MSMLCYTLIIAFLIGIWA). Positions 19–125 (APKSEDNVPL…ALNRNIRSKR (107 aa)) are excised as a propeptide. Basic and acidic residues predominate over residues 48–66 (LKTSRNTDQRHPAPKKAED). Residues 48-69 (LKTSRNTDQRHPAPKKAEDQEL) form a disordered region. 3 disulfide bridges follow: Cys139–Cys203, Cys181–Cys231, and Cys191–Cys233. Asn147 is a glycosylation site (N-linked (GlcNAc...) asparagine).

This sequence belongs to the NGF-beta family. Homodimer; non-covalently linked. As to expression, expressed by the venom gland.

It localises to the secreted. In terms of biological role, nerve growth factor is important for the development and maintenance of the sympathetic and sensory nervous systems. It stimulates division and differentiation of sympathetic and embryonic sensory neurons as well as basal forebrain cholinergic neurons in the brain. Its relevance in the snake venom is not clear. However, it has been shown to inhibit metalloproteinase-dependent proteolysis of platelet glycoprotein Ib alpha, suggesting a metalloproteinase inhibition to prevent metalloprotease autodigestion and/or protection against prey proteases. Binds a lipid between the two protein chains in the homodimer. The lipid-bound form promotes histamine relase from mouse mast cells, contrary to the lipid-free form. The chain is Venom nerve growth factor 3 from Demansia vestigiata (Lesser black whip snake).